A 513-amino-acid polypeptide reads, in one-letter code: Serine/threonine protein phosphatase 2A 55 kDa regulatory subunit B alpha isoform (513 aa).

An N-acetylmethionine modification is found at methionine 1. WD repeat units follow at residues 36–75 (QEVDIISAIEFDNSGNHLATGDRGGRVVLFERTDTNNSSG), 112–153 (EIEE…IKKI), 232–270 (AHDYHINSISNNSDGETFISADDLRINLWNLEISNQSFN), 281–321 (DLSE…LCDS), 340–378 (EIIASVSDIKFAKEGRYLLSRDYMTLKLWDINMDAGPVA), and 483–513 (DYTTKLLHLAWHPNENSIACAAANSLYMYYA).

The protein belongs to the phosphatase 2A regulatory subunit B family. PP2A consists of a common heteromeric enzyme, composed of a catalytic subunit (subunits C), a constant regulatory subunit (subunit A), and a variety of regulatory subunits such as subunits B (the R2/B/PR55/B55, R3/B''/PR72/PR130/PR59 and R5/B'/B56 families). Interacts with SIC/RON3. As to expression, expressed ubiquitously.

The B regulatory subunit may modulate substrate selectivity and catalytic activity, and may also direct the localization of the catalytic enzyme to a particular subcellular compartment. This chain is Serine/threonine protein phosphatase 2A 55 kDa regulatory subunit B alpha isoform (PP2AB1), found in Arabidopsis thaliana (Mouse-ear cress).